The primary structure comprises 259 residues: Acetylglutamate kinase (259 aa).

Substrate contacts are provided by residues 45–46, R67, and N159; that span reads GG.

This sequence belongs to the acetylglutamate kinase family. ArgB subfamily.

Its subcellular location is the cytoplasm. It catalyses the reaction N-acetyl-L-glutamate + ATP = N-acetyl-L-glutamyl 5-phosphate + ADP. It functions in the pathway amino-acid biosynthesis; L-arginine biosynthesis; N(2)-acetyl-L-ornithine from L-glutamate: step 2/4. In terms of biological role, catalyzes the ATP-dependent phosphorylation of N-acetyl-L-glutamate. This is Acetylglutamate kinase from Aeromonas salmonicida (strain A449).